Reading from the N-terminus, the 191-residue chain is Ribonuclease M5 1 (191 aa).

Positions 10-93 (KEVIVVEGKD…AFLTKHDAAP (84 aa)) constitute a Toprim domain. Positions 16, 62, and 64 each coordinate Mg(2+).

It belongs to the ribonuclease M5 family. Mg(2+) is required as a cofactor.

It is found in the cytoplasm. The catalysed reaction is Endonucleolytic cleavage of RNA, removing 21 and 42 nucleotides, respectively, from the 5'- and 3'-termini of a 5S-rRNA precursor.. Its function is as follows. Required for correct processing of both the 5' and 3' ends of 5S rRNA precursor. Cleaves both sides of a double-stranded region yielding mature 5S rRNA in one step. In Ligilactobacillus salivarius (strain CECT 5713) (Lactobacillus salivarius), this protein is Ribonuclease M5 1.